The following is a 377-amino-acid chain: 3-dehydroquinate synthase (377 aa).

NAD(+) is bound by residues 115–119, 139–140, Lys152, and Lys161; these read GVIGD and TS. Residues Glu194, His256, and His275 each contribute to the Zn(2+) site.

Belongs to the sugar phosphate cyclases superfamily. Dehydroquinate synthase family. It depends on Co(2+) as a cofactor. The cofactor is Zn(2+). NAD(+) serves as cofactor.

Its subcellular location is the cytoplasm. The enzyme catalyses 7-phospho-2-dehydro-3-deoxy-D-arabino-heptonate = 3-dehydroquinate + phosphate. The protein operates within metabolic intermediate biosynthesis; chorismate biosynthesis; chorismate from D-erythrose 4-phosphate and phosphoenolpyruvate: step 2/7. Functionally, catalyzes the conversion of 3-deoxy-D-arabino-heptulosonate 7-phosphate (DAHP) to dehydroquinate (DHQ). The sequence is that of 3-dehydroquinate synthase from Rhizobium rhizogenes (strain K84 / ATCC BAA-868) (Agrobacterium radiobacter).